The chain runs to 468 residues: MKHRIQHIHFVGIGGSGMSGIAEVLLNLGYTISGSDLQESAVTRRLAGLGAHVAIGHTAANVAGAGAIVTSTAVAGDNPEVIAARAAGIPVVPRAIMLAELMRLKRGIAVAGTHGKTTTTSLVASVLAAGDLDPTFVIGGRLTSAGANARLGQGEYIVVEADESDASFLNLLPVMAIVTNIDADHMDTYGHDVARLKSAFIEFTQRLPFYGSAVLCADDANVREIMPFVSRPITTYGLSPDAHVRGENVQADGTRMRFTVQRQDRATALPPLAIELNLPGLHNVRNALAAVAVATELGVPDEAIAQALASFKGVGRRFTQTGEFPVPAAHGGGTFTLIDDYGHHPVEMAATLAAARGAWPDRRIVLAFQPHRYTRTRDCFEDFVRVLGGADAVLLTEVYAAGEPPLVAADGRALARALRVAGRIEPVFVEDVADLPQAVLDFVRDGDVVVVMGAGSISKVPGLVGELA.

Residue 112–118 (GTHGKTT) coordinates ATP.

This sequence belongs to the MurCDEF family.

It localises to the cytoplasm. The catalysed reaction is UDP-N-acetyl-alpha-D-muramate + L-alanine + ATP = UDP-N-acetyl-alpha-D-muramoyl-L-alanine + ADP + phosphate + H(+). It functions in the pathway cell wall biogenesis; peptidoglycan biosynthesis. Its function is as follows. Cell wall formation. This is UDP-N-acetylmuramate--L-alanine ligase from Bordetella petrii (strain ATCC BAA-461 / DSM 12804 / CCUG 43448).